The chain runs to 867 residues: Piwi-like protein 1 (867 aa).

Residues 1-11 (MTGRARARARG) show a composition bias toward basic residues. The disordered stretch occupies residues 1 to 70 (MTGRARARAR…QRGPQDAPKT (70 aa)). Residues 28-44 (AQKTLPSHPSEQRQSLQ) are compositionally biased toward polar residues. One can recognise a PAZ domain in the interval 286–397 (TVLDFMYSLY…LIPELCYLTG (112 aa)). The segment at 324 to 326 (TYR) is required for binding 2'-O-methylated 3'-end of piRNAs. An MID region region spans residues 485–621 (SRETRVAPLI…LQMNCKMGGE (137 aa)). Positions 561–853 (IVVCILSSTR…LAFLVGQSIH (293 aa)) constitute a Piwi domain. Catalysis depends on residues Asp638, Glu676, Asp708, and His842.

Belongs to the argonaute family. Piwi subfamily. Mg(2+) is required as a cofactor. Methylated on arginine residues; required for the interaction with Tudor domain-containing protein and subsequent localization to the meiotic nuage, also named P granule.

The protein localises to the cytoplasm. Its function is as follows. Endoribonuclease that plays a central role in postnatal germ cells by repressing transposable elements and preventing their mobilization, which is essential for the germline integrity. Acts via the piRNA metabolic process, which mediates the repression of transposable elements during meiosis by forming complexes composed of piRNAs and Piwi proteins and govern the methylation and subsequent repression of transposons. Directly binds methylated piRNAs, a class of 24 to 30 nucleotide RNAs that are generated by a Dicer-independent mechanism and are primarily derived from transposons and other repeated sequence elements. Strongly prefers a uridine in the first position of their guide (g1U preference, also named 1U-bias). Besides their function in transposable elements repression, piRNAs are probably involved in other processes during meiosis such as translation regulation. Not involved in the piRNA amplification loop, also named ping-pong amplification cycle. Acts as an endoribonuclease that cleaves transposon messenger RNAs. This is Piwi-like protein 1 (PIWIL1) from Gallus gallus (Chicken).